A 284-amino-acid chain; its full sequence is Pantothenate synthetase (284 aa).

30–37 (MGFLHEGH) is a binding site for ATP. The Proton donor role is filled by histidine 37. Glutamine 61 provides a ligand contact to (R)-pantoate. Glutamine 61 contributes to the beta-alanine binding site. An ATP-binding site is contributed by 147–150 (GRKD). Glutamine 153 lines the (R)-pantoate pocket. ATP is bound by residues valine 176 and 184-187 (MSSR).

Belongs to the pantothenate synthetase family. In terms of assembly, homodimer.

Its subcellular location is the cytoplasm. It catalyses the reaction (R)-pantoate + beta-alanine + ATP = (R)-pantothenate + AMP + diphosphate + H(+). The protein operates within cofactor biosynthesis; (R)-pantothenate biosynthesis; (R)-pantothenate from (R)-pantoate and beta-alanine: step 1/1. Its function is as follows. Catalyzes the condensation of pantoate with beta-alanine in an ATP-dependent reaction via a pantoyl-adenylate intermediate. The chain is Pantothenate synthetase from Pelobacter propionicus (strain DSM 2379 / NBRC 103807 / OttBd1).